The primary structure comprises 600 residues: Elongation factor 4 (600 aa).

The tr-type G domain maps to 5–187; that stretch reads KYIRNFSIVA…EIVEKIPAPE (183 aa). Residues 17 to 22 and 134 to 137 each bind GTP; these read DHGKST and NKVD.

The protein belongs to the TRAFAC class translation factor GTPase superfamily. Classic translation factor GTPase family. LepA subfamily.

It localises to the cell membrane. The enzyme catalyses GTP + H2O = GDP + phosphate + H(+). In terms of biological role, required for accurate and efficient protein synthesis under certain stress conditions. May act as a fidelity factor of the translation reaction, by catalyzing a one-codon backward translocation of tRNAs on improperly translocated ribosomes. Back-translocation proceeds from a post-translocation (POST) complex to a pre-translocation (PRE) complex, thus giving elongation factor G a second chance to translocate the tRNAs correctly. Binds to ribosomes in a GTP-dependent manner. This chain is Elongation factor 4, found in Clostridium perfringens (strain 13 / Type A).